The primary structure comprises 39 residues: Photosystem II reaction center protein J (39 aa).

Residues 7–27 (IPLWLIATVGGTAALTVVGLF) form a helical membrane-spanning segment.

The protein belongs to the PsbJ family. As to quaternary structure, PSII is composed of 1 copy each of membrane proteins PsbA, PsbB, PsbC, PsbD, PsbE, PsbF, PsbH, PsbI, PsbJ, PsbK, PsbL, PsbM, PsbT, PsbX, PsbY, PsbZ, Psb30/Ycf12, at least 3 peripheral proteins of the oxygen-evolving complex and a large number of cofactors. It forms dimeric complexes.

The protein localises to the plastid. Its subcellular location is the chloroplast thylakoid membrane. In terms of biological role, one of the components of the core complex of photosystem II (PSII). PSII is a light-driven water:plastoquinone oxidoreductase that uses light energy to abstract electrons from H(2)O, generating O(2) and a proton gradient subsequently used for ATP formation. It consists of a core antenna complex that captures photons, and an electron transfer chain that converts photonic excitation into a charge separation. The protein is Photosystem II reaction center protein J of Rhodomonas salina (Cryptomonas salina).